Here is a 491-residue protein sequence, read N- to C-terminus: Glutamyl-tRNA(Gln) amidotransferase subunit A (491 aa).

Residues lysine 79 and serine 154 each act as charge relay system in the active site. Serine 178 functions as the Acyl-ester intermediate in the catalytic mechanism.

It belongs to the amidase family. GatA subfamily. In terms of assembly, heterotrimer of A, B and C subunits.

It catalyses the reaction L-glutamyl-tRNA(Gln) + L-glutamine + ATP + H2O = L-glutaminyl-tRNA(Gln) + L-glutamate + ADP + phosphate + H(+). Its function is as follows. Allows the formation of correctly charged Gln-tRNA(Gln) through the transamidation of misacylated Glu-tRNA(Gln) in organisms which lack glutaminyl-tRNA synthetase. The reaction takes place in the presence of glutamine and ATP through an activated gamma-phospho-Glu-tRNA(Gln). The protein is Glutamyl-tRNA(Gln) amidotransferase subunit A of Synechococcus sp. (strain CC9902).